The sequence spans 188 residues: Elongation factor P (188 aa).

Lys34 bears the N6-(3,6-diaminohexanoyl)-5-hydroxylysine mark.

Belongs to the elongation factor P family. In terms of processing, may be beta-lysylated on the epsilon-amino group of Lys-34 by the combined action of EpmA and EpmB, and then hydroxylated on the C5 position of the same residue by EpmC (if this protein is present). Lysylation is critical for the stimulatory effect of EF-P on peptide-bond formation. The lysylation moiety may extend toward the peptidyltransferase center and stabilize the terminal 3-CCA end of the tRNA. Hydroxylation of the C5 position on Lys-34 may allow additional potential stabilizing hydrogen-bond interactions with the P-tRNA.

Its subcellular location is the cytoplasm. Its pathway is protein biosynthesis; polypeptide chain elongation. Involved in peptide bond synthesis. Alleviates ribosome stalling that occurs when 3 or more consecutive Pro residues or the sequence PPG is present in a protein, possibly by augmenting the peptidyl transferase activity of the ribosome. Modification of Lys-34 is required for alleviation. In Xylella fastidiosa (strain M23), this protein is Elongation factor P.